A 297-amino-acid chain; its full sequence is D-alanine--D-alanine ligase (297 aa).

Residues 95 to 294 (KMLWKAFGLP…FEQLVVKILE (200 aa)) form the ATP-grasp domain. 125 to 180 (VAKLGLPLMVKPSLEGSSVGLTKVKAVEELKSAVEYALKFDNTILIEEWLAGDELT) is an ATP binding site. Mg(2+) is bound by residues Asp248, Glu261, and Asn263.

Belongs to the D-alanine--D-alanine ligase family. Requires Mg(2+) as cofactor. It depends on Mn(2+) as a cofactor.

Its subcellular location is the cytoplasm. The catalysed reaction is 2 D-alanine + ATP = D-alanyl-D-alanine + ADP + phosphate + H(+). The protein operates within cell wall biogenesis; peptidoglycan biosynthesis. In terms of biological role, cell wall formation. In Haemophilus influenzae (strain PittEE), this protein is D-alanine--D-alanine ligase.